A 580-amino-acid polypeptide reads, in one-letter code: MTNHEQVLTDYLAAFIEELVQAGVKEAIISPGSRSTPLALMMAEHPTLKIYVDVDERSAGFFALGLAKASKRPVVLLCTSGTAAANYFPAVVEANLSQIPLIVLTADRPHELRNVGAPQAMDQLHLYGSHVKDFTDMALPENSDEMLRYAKWHSSRAVDIAMKTPRGPVHLNFPLREPLVPILEPSPFTATGKKHHHVHIYYTHEVLDDSSIQKMVTECTGKKGVFVVGPIDKKELEQPMVDLAKKLGWPILADPLSGLRSYGAMDEVVIDQYDAFLKEADILDKLTPEVVIRFGSMPVSKPLKNWLEHLFGIRFYVVDPGAAWKDPIKAVTDMIHCDERFLLDIMQQNMPDDTKDASWLNRWTSYNQKAREIVLEEMANTTTLEEGKIVSELRRLLPDKAGLFIGNSMPIRDVDTYFSQIDKKIKMLANRGANGIDGVVSSALGASVVFQPMFLLIGDLSFYHDMNGLLMAKKYKMNLTIIIVNNDGGGIFSFLPQANEPKYFESLFGTSTELDFRFAAAFYDADYHEAKSVDSLEEAIDKASYHKGLDIIEVKTNRHENKANHQALWEKIATALKALD.

Belongs to the TPP enzyme family. MenD subfamily. As to quaternary structure, homodimer. It depends on Mg(2+) as a cofactor. Mn(2+) is required as a cofactor. The cofactor is thiamine diphosphate.

It carries out the reaction isochorismate + 2-oxoglutarate + H(+) = 5-enolpyruvoyl-6-hydroxy-2-succinyl-cyclohex-3-ene-1-carboxylate + CO2. It participates in quinol/quinone metabolism; 1,4-dihydroxy-2-naphthoate biosynthesis; 1,4-dihydroxy-2-naphthoate from chorismate: step 2/7. Its pathway is quinol/quinone metabolism; menaquinone biosynthesis. Catalyzes the thiamine diphosphate-dependent decarboxylation of 2-oxoglutarate and the subsequent addition of the resulting succinic semialdehyde-thiamine pyrophosphate anion to isochorismate to yield 2-succinyl-5-enolpyruvyl-6-hydroxy-3-cyclohexene-1-carboxylate (SEPHCHC). This is 2-succinyl-5-enolpyruvyl-6-hydroxy-3-cyclohexene-1-carboxylate synthase from Listeria innocua serovar 6a (strain ATCC BAA-680 / CLIP 11262).